The chain runs to 81 residues: Large ribosomal subunit protein bL31B (81 aa).

The protein belongs to the bacterial ribosomal protein bL31 family. Type B subfamily. As to quaternary structure, part of the 50S ribosomal subunit.

In Pediococcus pentosaceus (strain ATCC 25745 / CCUG 21536 / LMG 10740 / 183-1w), this protein is Large ribosomal subunit protein bL31B.